The primary structure comprises 481 residues: Glutamyl-tRNA(Gln) amidotransferase subunit A (481 aa).

Residues lysine 74 and serine 149 each act as charge relay system in the active site. The active-site Acyl-ester intermediate is serine 173.

Belongs to the amidase family. GatA subfamily. Heterotrimer of A, B and C subunits.

It catalyses the reaction L-glutamyl-tRNA(Gln) + L-glutamine + ATP + H2O = L-glutaminyl-tRNA(Gln) + L-glutamate + ADP + phosphate + H(+). Allows the formation of correctly charged Gln-tRNA(Gln) through the transamidation of misacylated Glu-tRNA(Gln) in organisms which lack glutaminyl-tRNA synthetase. The reaction takes place in the presence of glutamine and ATP through an activated gamma-phospho-Glu-tRNA(Gln). The chain is Glutamyl-tRNA(Gln) amidotransferase subunit A from Francisella tularensis subsp. novicida (strain U112).